Reading from the N-terminus, the 141-residue chain is Small ribosomal subunit protein uS12 (141 aa).

A 3-methylthioaspartic acid modification is found at Asp-89. Residues 104–141 (ASGAVGPSNTNKLNRNVSRSKYGVKRPKAGAKPASKAK) form a disordered region. Polar residues predominate over residues 110–122 (PSNTNKLNRNVSR). Over residues 125–141 (YGVKRPKAGAKPASKAK) the composition is skewed to basic residues.

This sequence belongs to the universal ribosomal protein uS12 family. As to quaternary structure, part of the 30S ribosomal subunit. Contacts proteins S8 and S17. May interact with IF1 in the 30S initiation complex.

Functionally, with S4 and S5 plays an important role in translational accuracy. In terms of biological role, interacts with and stabilizes bases of the 16S rRNA that are involved in tRNA selection in the A site and with the mRNA backbone. Located at the interface of the 30S and 50S subunits, it traverses the body of the 30S subunit contacting proteins on the other side and probably holding the rRNA structure together. The combined cluster of proteins S8, S12 and S17 appears to hold together the shoulder and platform of the 30S subunit. The chain is Small ribosomal subunit protein uS12 from Methylacidiphilum infernorum (isolate V4) (Methylokorus infernorum (strain V4)).